The primary structure comprises 244 residues: Large ribosomal subunit protein uL30 (244 aa).

The disordered stretch occupies residues Met-1 to Ala-37.

This sequence belongs to the universal ribosomal protein uL30 family.

In terms of biological role, binds to G-rich structures in 28S rRNA and in mRNAs. Plays a regulatory role in the translation apparatus; inhibits cell-free translation of mRNAs. This Caenorhabditis elegans protein is Large ribosomal subunit protein uL30 (rpl-7).